The following is a 720-amino-acid chain: Fatty acid oxidation complex subunit alpha (720 aa).

The enoyl-CoA hydratase/isomerase stretch occupies residues 1–189 (MIYQGETLSV…KLGLVDAVVA (189 aa)). Residue D296 participates in substrate binding. Residues 311–720 (QPTKKGVVLG…ESYYTQQVNA (410 aa)) are 3-hydroxyacyl-CoA dehydrogenase. NAD(+) contacts are provided by residues M324, D343, 400 to 402 (VVE), K407, and S429. Residue H450 is the For 3-hydroxyacyl-CoA dehydrogenase activity of the active site. NAD(+) is bound at residue N453. The substrate site is built by N500 and Y660.

It in the N-terminal section; belongs to the enoyl-CoA hydratase/isomerase family. The protein in the C-terminal section; belongs to the 3-hydroxyacyl-CoA dehydrogenase family. Heterotetramer of two alpha chains (FadB) and two beta chains (FadA).

The catalysed reaction is a (3S)-3-hydroxyacyl-CoA + NAD(+) = a 3-oxoacyl-CoA + NADH + H(+). It catalyses the reaction a (3S)-3-hydroxyacyl-CoA = a (2E)-enoyl-CoA + H2O. The enzyme catalyses a 4-saturated-(3S)-3-hydroxyacyl-CoA = a (3E)-enoyl-CoA + H2O. It carries out the reaction (3S)-3-hydroxybutanoyl-CoA = (3R)-3-hydroxybutanoyl-CoA. The catalysed reaction is a (3Z)-enoyl-CoA = a 4-saturated (2E)-enoyl-CoA. It catalyses the reaction a (3E)-enoyl-CoA = a 4-saturated (2E)-enoyl-CoA. It participates in lipid metabolism; fatty acid beta-oxidation. Involved in the aerobic and anaerobic degradation of long-chain fatty acids via beta-oxidation cycle. Catalyzes the formation of 3-oxoacyl-CoA from enoyl-CoA via L-3-hydroxyacyl-CoA. It can also use D-3-hydroxyacyl-CoA and cis-3-enoyl-CoA as substrate. In Photobacterium profundum (strain SS9), this protein is Fatty acid oxidation complex subunit alpha.